Consider the following 593-residue polypeptide: Probable metalloendopeptidase G1-type (593 aa).

H41 is a binding site for Zn(2+). The active site involves E44. H45 provides a ligand contact to Zn(2+).

This sequence belongs to the peptidase M44 family. Zn(2+) serves as cofactor.

Functionally, seems to be involved in viral proteins maturation by cleavage at Ala-Gly-|-Xaa motifs. The chain is Probable metalloendopeptidase G1-type from Homo sapiens (Human).